The sequence spans 122 residues: Small ribosomal subunit protein uS13 (122 aa).

The interval 95–122 (GLPVRGQRTHTNARTRKGPAKPIAGKKK) is disordered.

It belongs to the universal ribosomal protein uS13 family. Part of the 30S ribosomal subunit. Forms a loose heterodimer with protein S19. Forms two bridges to the 50S subunit in the 70S ribosome.

In terms of biological role, located at the top of the head of the 30S subunit, it contacts several helices of the 16S rRNA. In the 70S ribosome it contacts the 23S rRNA (bridge B1a) and protein L5 of the 50S subunit (bridge B1b), connecting the 2 subunits; these bridges are implicated in subunit movement. Contacts the tRNAs in the A and P-sites. The sequence is that of Small ribosomal subunit protein uS13 from Rhodospirillum rubrum (strain ATCC 11170 / ATH 1.1.1 / DSM 467 / LMG 4362 / NCIMB 8255 / S1).